Here is a 578-residue protein sequence, read N- to C-terminus: Proteasome-associated ATPase (578 aa).

Residues 8–84 (TAAELRNQVR…LKEEVDRLAQ (77 aa)) are a coiled coil. Residue 267 to 272 (GCGKTL) participates in ATP binding. Positions 577–578 (YL) are docks into pockets in the proteasome alpha-ring.

This sequence belongs to the AAA ATPase family. As to quaternary structure, homohexamer. Assembles into a hexameric ring structure that caps the 20S proteasome core. Strongly interacts with the prokaryotic ubiquitin-like protein Pup through a hydrophobic interface; the interacting region of ARC lies in its N-terminal coiled-coil domain. There is one Pup binding site per ARC hexamer ring. Upon ATP-binding, the C-terminus of ARC interacts with the alpha-rings of the proteasome core, possibly by binding to the intersubunit pockets.

It participates in protein degradation; proteasomal Pup-dependent pathway. In terms of biological role, ATPase which is responsible for recognizing, binding, unfolding and translocation of pupylated proteins into the bacterial 20S proteasome core particle. May be essential for opening the gate of the 20S proteasome via an interaction with its C-terminus, thereby allowing substrate entry and access to the site of proteolysis. Thus, the C-termini of the proteasomal ATPase may function like a 'key in a lock' to induce gate opening and therefore regulate proteolysis. This is Proteasome-associated ATPase from Kribbella flavida (strain DSM 17836 / JCM 10339 / NBRC 14399).